We begin with the raw amino-acid sequence, 212 residues long: Orotate phosphoribosyltransferase (212 aa).

5-phospho-alpha-D-ribose 1-diphosphate contacts are provided by residues R97, K101, H103, and 123–131 (DDLISTGGS). S127 serves as a coordination point for orotate.

This sequence belongs to the purine/pyrimidine phosphoribosyltransferase family. PyrE subfamily. Homodimer. It depends on Mg(2+) as a cofactor.

The enzyme catalyses orotidine 5'-phosphate + diphosphate = orotate + 5-phospho-alpha-D-ribose 1-diphosphate. The protein operates within pyrimidine metabolism; UMP biosynthesis via de novo pathway; UMP from orotate: step 1/2. Functionally, catalyzes the transfer of a ribosyl phosphate group from 5-phosphoribose 1-diphosphate to orotate, leading to the formation of orotidine monophosphate (OMP). The protein is Orotate phosphoribosyltransferase of Lactiplantibacillus plantarum (strain ATCC BAA-793 / NCIMB 8826 / WCFS1) (Lactobacillus plantarum).